Reading from the N-terminus, the 131-residue chain is Two-component response regulator ORR3 (131 aa).

Residues 12 to 129 (HVLAVDDSIV…DVSRLCNRVI (118 aa)) enclose the Response regulatory domain. 4-aspartylphosphate is present on Asp-62.

Belongs to the ARR family. Type-A subfamily. In terms of processing, two-component system major event consists of a His-to-Asp phosphorelay between a sensor histidine kinase (HK) and a response regulator (RR). In plants, the His-to-Asp phosphorelay involves an additional intermediate named Histidine-containing phosphotransfer protein (HPt). This multistep phosphorelay consists of a His-Asp-His-Asp sequential transfer of a phosphate group between first a His and an Asp of the HK protein, followed by the transfer to a conserved His of the HPt protein and finally the transfer to an Asp in the receiver domain of the RR protein. As to expression, expressed in roots, mature leaves and flowers, and at low levels in shoots.

Functionally, functions as a response regulator involved in His-to-Asp phosphorelay signal transduction system. Phosphorylation of the Asp residue in the receiver domain activates the ability of the protein to promote the transcription of target genes. Type-A response regulators seem to act as negative regulators of the cytokinin signaling. This Oryza sativa subsp. indica (Rice) protein is Two-component response regulator ORR3.